A 1461-amino-acid chain; its full sequence is MSESESDYFTDGSEDDFVPTSKKSTKKNASSKSKQPLGDATNSTVSSSRSSTPKPTNASETYQKLSQLEHILKRPDTYIGSVEKTKTEMWCFDAETESMVFKEVTIVPGLYKIFDEILVNAADNKIRDPSMKNIRVKIDAENNIIEVMNDGKGIPIEMHTKENMYIPELIFGNLLTSSNYDDDQKKVTGGRNGFGAKLCNIFSTQFEVETADLNMGKLYKQSWTNNMSNVSKPKITTLRTKKEYTKITFRPDLSKFDMDCLDNDLLSVLRRRVYDLCGTVKNCNIYLNDKRLNISSFKGYVEMYVKAIKERSPEPEPQDGTIKNFTTIVHEVFNDRWEVAFAVSDGSFNQVSFVNSIATTSGGTHVKYVSDQIINKLVETLSKKEKGKKKLMIKPQEVRDNMFLFINCLIENPAFTSQTKEQLTTKVSQFGGKDKFVANDNLINRILKTSIVDKIRAIANANEDKALQKADGSRKSRIKGQVNLVDANKAGTKDGHNCTLILTEGLSAMNLAVAGLSVVGRDYYGCFPLRGKLLNVREASADQISKNAEINSLKQIIGLQHKKVYTAENIKSLRYGHIMIMTDQDQDGSHIKGLIINFLETSFPGLLDIPGFLLEFITPIVKVTVKARGAGGKRVIPFYTMPEFEHWRDTEGKQCRWTQKYYKGLGTSTPMEAREYFTALDRHLKRFHALQGEDKDYIDLAFSKKKADERKEWLQGFLPGTHLDPEITEIPISDFINKEFILFSMSDNVRSIPSVLDGFKPGQRKVLYGCFKKKLRSEIKVAQLAGYVSENTGYHHGEQSLVQTIIGLAQNFVGSNNINVLKPNGSFGSRAAGGKDFSAARYIFTELSEITRKIFNPLDDPLYTYVQDDEQTVEPEWYLPVLPMILVNGAEGIGTGWSTNIPSYNPKDLVTNIRRLMNGEELQEMTPWYKGWGGDLEPMGPQKFKVSGRIEQIDSNTVEITEIPVKTWTNNVKEFLLSGFGNEKTQPWIKDMEEHHTTSIRFVVKLTDAEMQKSLRIGLLERFKLVSSLSLANMVAFDPMGRIKKYNDVLEIIKDFYYVRLEYYQKRKDYMTDNLQNQLLMLSEQARFIKMIIEKQLSVANKKKKQLVALLEEHNFTKFSKDGKPIKSSEELLTGDDADEEEETQEQEGDEDVGNTSVANIQEGEPEQAAHVPETIYSSYDYLLGMAIWSLTYERFMRIMQQRDQKEAELNALLSKSAKDLWNQDLDEFLAEFDKFLLRDEQERESLASNGKKKSTKRRAKATATKDQPNNKKVKVEPKEKKSTSAKPIVKKEASNEPQASSSSKPKEKDDILSFFSSSSSSAKKTTKPSGRATSNKEIETITLFSDDDDDEDIFNLNSSSSTKVKKEAKSRSATPAAEKSKKSKSSGKQSILDELEDLEILGNFDKPEPKERRTRETASTTKRNTKKKPVIIDSDDEDEDEEDDIVMSDGDDDDDFIVDE.

A compositionally biased stretch (acidic residues) spans 1-17 (MSESESDYFTDGSEDDF). The interval 1 to 61 (MSESESDYFT…TPKPTNASET (61 aa)) is disordered. Residues 41 to 52 (TNSTVSSSRSST) are compositionally biased toward low complexity. ATP contacts are provided by residues asparagine 120, asparagine 149, 177 to 179 (SSN), and 190 to 197 (GRNGFGAK). The interaction with DNA stretch occupies residues 382 to 389 (SKKEKGKK). An ATP-binding site is contributed by 418 to 420 (QTK). The Toprim domain occupies 498–614 (CTLILTEGLS…GLLDIPGFLL (117 aa)). Positions 504, 583, and 585 each coordinate Mg(2+). Residues 752–1226 (IPSVLDGFKP…SAKDLWNQDL (475 aa)) form the Topo IIA-type catalytic domain. The active-site O-(5'-phospho-DNA)-tyrosine intermediate is tyrosine 842. The interaction with DNA stretch occupies residues 1024-1033 (KLVSSLSLAN). Disordered stretches follow at residues 1122–1155 (DGKPIKSSEELLTGDDADEEEETQEQEGDEDVGN) and 1244–1461 (RESL…IVDE). The span at 1133–1153 (LTGDDADEEEETQEQEGDEDV) shows a compositional bias: acidic residues. The span at 1251–1261 (GKKKSTKRRAK) shows a compositional bias: basic residues. Basic and acidic residues-rich tracts occupy residues 1274–1283 (VKVEPKEKKS) and 1406–1417 (DKPEPKERRTRE). The span at 1434–1461 (DSDDEDEDEEDDIVMSDGDDDDDFIVDE) shows a compositional bias: acidic residues.

Belongs to the type II topoisomerase family. Homodimer. It depends on Mg(2+) as a cofactor. Requires Mn(2+) as cofactor. Ca(2+) serves as cofactor.

It localises to the nucleus. It carries out the reaction ATP-dependent breakage, passage and rejoining of double-stranded DNA.. Its function is as follows. Control of topological states of DNA by transient breakage and subsequent rejoining of DNA strands. Topoisomerase II makes double-strand breaks. The protein is DNA topoisomerase 2 (TOP2) of Candida albicans (Yeast).